A 382-amino-acid chain; its full sequence is SPRY domain-containing protein C285.10c (382 aa).

A helical transmembrane segment spans residues 21–41 (LAILFIFIALAAVIVLLICLL). Residues 79–284 (GFSLLDDMGK…LHVNLGQAGY (206 aa)) form the B30.2/SPRY domain. A disordered region spans residues 304 to 382 (APPPSYSTSQ…MHSMPATDEV (79 aa)). 2 stretches are compositionally biased toward polar residues: residues 309 to 334 (YSTS…QGDT) and 361 to 372 (FSPSSSNNQAYQ).

It is found in the cytoplasm. Its subcellular location is the membrane. This is SPRY domain-containing protein C285.10c from Schizosaccharomyces pombe (strain 972 / ATCC 24843) (Fission yeast).